A 946-amino-acid chain; its full sequence is MRLLICLTLLGLVCGNPVQLTDNSIALQNTYDNYVLPGESFPTFYDVQLFFDPEYEASFNGTVAIRVVPRIATQEIVLHAMEMEILSIRAYSDLPSDDNLNENLFSSYTLATDDTHLLKIQFTRVLDALQPITVEISYSAQYAPNMFGVYVSRYVENGATVSLVTSQLQPTFARRAFPCYDEPALKAVFRTTIYAPPAYNVVETNMPLRTDSLKSDRPGFTKHEFQDTLVMSSYLLAYLVSKFDYISNENNPTYDKSMKVFSRPGTQNTAEFALDFGQKNMVELEKYTEFPYAFPKIDKVAVPDFAAGAMENWGLVIYREIALLVQEGVTTTSTLQGIGRIISHENTHQWFGNEVGPDSWTYTWLNEGFANFFESFATDLVLPEWRMMDQFVINMQNVFQSDAVLSVNPITFEVRTPSQILGTFNSVAYQKSGSVIRMMQHFLTPEIFRKSLALYISRMSRKAAKPTDLFEAIQEVVDASDHSIRWRLSIIMNRWTQQGGFPVVTVRRSAPSAQSFVITQRRFLTDSTQESNTVWNVPLNWVLSTDVNFNDTRPMAWLPPQLAAEAVQVPGLQNAEWFIVNKQQTGYYRVNYDPENWRALAKVLNDTHEIIHLLNRAQLIDDSFNLARNGRLDYSLAFDLSRYLVQERDYIPWAAANAAFNYLNSVLSGSSVHPLFQEYLLFLTAPLYQRLGFNAATGEEHVTPFHRNIILNINCLHGNEDCVSTAETLLQNFRDNPTQTLNPDIQTTVFCSGLRGGDVDNFNFLWARYTATQDSSEQSILLNALGCTSNADRRDFLFSQVIASDSQVREQDRHSVLVSAINSGPDNMNAALDFVLENFANIQPNVQGLTGTTNILNAFARTLTTQEHANKIDEFSNKYANVFTAGEMASVAAIKENIAASITWNSQNAATVEAWLRKNFGTDGASTVSASITIIISAMVAIYNIL.

The first 15 residues, 1 to 15 (MRLLICLTLLGLVCG), serve as a signal peptide directing secretion. The N-linked (GlcNAc...) asparagine glycan is linked to Asn60. 308–312 (GAMEN) is a substrate binding site. His344 contributes to the Zn(2+) binding site. The Proton acceptor role is filled by Glu345. Residues His348 and Glu367 each contribute to the Zn(2+) site. N-linked (GlcNAc...) asparagine glycosylation is found at Asn550 and Asn605. Disulfide bonds link Cys715/Cys722 and Cys751/Cys787.

Belongs to the peptidase M1 family. Zn(2+) serves as cofactor.

It localises to the cell membrane. The enzyme catalyses Release of an N-terminal amino acid, Xaa-|-Yaa- from a peptide, amide or arylamide. Xaa is preferably Ala, but may be most amino acids including Pro (slow action). When a terminal hydrophobic residue is followed by a prolyl residue, the two may be released as an intact Xaa-Pro dipeptide.. The chain is Aminopeptidase N (APN1) from Plutella xylostella (Diamondback moth).